The following is a 418-amino-acid chain: N-acetylglucosamine-6-phosphate deacetylase (418 aa).

E154 is an a divalent metal cation binding site. 165-166 contributes to the substrate binding site; the sequence is CH. Positions 223 and 244 each coordinate a divalent metal cation. Residues 247–248, R255, and 281–284 contribute to the substrate site; these read NA and DGIH. Residue D306 is the Proton donor/acceptor of the active site. 340 to 342 is a substrate binding site; it reads TAG.

This sequence belongs to the metallo-dependent hydrolases superfamily. NagA family. It depends on a divalent metal cation as a cofactor.

It catalyses the reaction N-acetyl-D-glucosamine 6-phosphate + H2O = D-glucosamine 6-phosphate + acetate. The protein is N-acetylglucosamine-6-phosphate deacetylase of Caenorhabditis elegans.